The primary structure comprises 369 residues: D-alanine--D-alanine ligase (369 aa).

Residues lysine 152–glutamate 359 form the ATP-grasp domain. Arginine 180–glutamate 235 is a binding site for ATP. Aspartate 314, glutamate 326, and asparagine 328 together coordinate Mg(2+).

The protein belongs to the D-alanine--D-alanine ligase family. Mg(2+) is required as a cofactor. Requires Mn(2+) as cofactor.

The protein resides in the cytoplasm. It carries out the reaction 2 D-alanine + ATP = D-alanyl-D-alanine + ADP + phosphate + H(+). It functions in the pathway cell wall biogenesis; peptidoglycan biosynthesis. Its function is as follows. Cell wall formation. This is D-alanine--D-alanine ligase from Mycolicibacterium paratuberculosis (strain ATCC BAA-968 / K-10) (Mycobacterium paratuberculosis).